Consider the following 181-residue polypeptide: MIPLAIKIGITGPVGSIKSEALQKIIDMLKNDNLNVQGVLVSKVTNNGKLTGYTIEDIESKRKAQFCFDNFVSRVKIDKLGVDTKILEEILIPSLQKARETADVIVIDEIGKLENTTKKVHAEIEETLKCGKPLIVTLHKRSRNPVLQEIKSLEGVRVFDITPINKNILPFKVMHVLKGEE.

ATP contacts are provided by residues glycine 12 to serine 19 and valine 104 to glycine 111.

This sequence belongs to the THEP1 NTPase family.

The enzyme catalyses a ribonucleoside 5'-triphosphate + H2O = a ribonucleoside 5'-diphosphate + phosphate + H(+). Has nucleotide phosphatase activity towards ATP, GTP, CTP, TTP and UTP. May hydrolyze nucleoside diphosphates with lower efficiency. This chain is Nucleoside-triphosphatase THEP1, found in Thermoplasma acidophilum (strain ATCC 25905 / DSM 1728 / JCM 9062 / NBRC 15155 / AMRC-C165).